The following is a 739-amino-acid chain: Catalase-peroxidase (739 aa).

The first 23 residues, 1–23, serve as a signal peptide directing secretion; it reads MLKKIVTALGMSGMLLAANSAIA. Positions 100–221 form a cross-link, tryptophyl-tyrosyl-methioninium (Trp-Tyr) (with M-247); that stretch reads WHDAGTYRLA…YAATQMGLIY (122 aa). The Proton acceptor role is filled by histidine 101. A cross-link (tryptophyl-tyrosyl-methioninium (Tyr-Met) (with W-100)) is located at residues 221–247; that stretch reads YVNPEGPDGKPDIKGAASEIRQAFRAM. Histidine 262 is a heme b binding site.

This sequence belongs to the peroxidase family. Peroxidase/catalase subfamily. Homodimer or homotetramer. It depends on heme b as a cofactor. Formation of the three residue Trp-Tyr-Met cross-link is important for the catalase, but not the peroxidase activity of the enzyme.

It carries out the reaction H2O2 + AH2 = A + 2 H2O. The enzyme catalyses 2 H2O2 = O2 + 2 H2O. Bifunctional enzyme with both catalase and broad-spectrum peroxidase activity. This chain is Catalase-peroxidase, found in Francisella philomiragia subsp. philomiragia (strain ATCC 25017 / CCUG 19701 / FSC 153 / O#319-036).